We begin with the raw amino-acid sequence, 306 residues long: uncharacterized protein (306 aa).

It to L.delbrueckii similar ORF in glnA 5'region.

This is an uncharacterized protein from Lactobacillus delbrueckii subsp. bulgaricus.